Consider the following 67-residue polypeptide: Large ribosomal subunit protein bL35 (67 aa).

The protein belongs to the bacterial ribosomal protein bL35 family.

The protein is Large ribosomal subunit protein bL35 of Acidiphilium cryptum (strain JF-5).